We begin with the raw amino-acid sequence, 561 residues long: Zinc finger protein 394 (561 aa).

Phosphoserine is present on serine 12. Residue lysine 40 forms a Glycyl lysine isopeptide (Lys-Gly) (interchain with G-Cter in SUMO2) linkage. The tract at residues 43-62 (EDSLGSWEPSYPAASPDPET) is disordered. The SCAN box domain occupies 64–146 (RLHFRQLRYQ…AVVRALQRAL (83 aa)). Residues 155 to 230 (VTFEDMAVSL…LQEAFQGKRP (76 aa)) form the KRAB domain. Residues lysine 203 and lysine 228 each participate in a glycyl lysine isopeptide (Lys-Gly) (interchain with G-Cter in SUMO2) cross-link. Residues 238–247 (THEDRVEKQS) show a composition bias toward basic and acidic residues. The disordered stretch occupies residues 238-283 (THEDRVEKQSGDPLPLKLENSPEAEGFNSISDVNKNGSIEGEDSKN). Lysine 254 participates in a covalent cross-link: Glycyl lysine isopeptide (Lys-Gly) (interchain with G-Cter in SUMO2). Polar residues predominate over residues 265–274 (NSISDVNKNG). Lysine 282 participates in a covalent cross-link: Glycyl lysine isopeptide (Lys-Gly) (interchain with G-Cter in SUMO2). C2H2-type zinc fingers lie at residues 358-380 (YKCGNCGKSFKQRSDLFRHQRIH), 386-408 (YGCQECGKSFSQSAALTKHQRTH), 414-436 (YTCLKCGERFRQNSHLNRHQSTH), 442-463 (FKCEECGETCHISNLFRHQRLH), 469-491 (YKCEECEKSFKQRSDLFKHHRIH), 497-519 (YGCSVCGKRFNQSATLIKHQRIH), and 525-547 (YKCLECGERFRQSTHLIRHQRIH). A Glycyl lysine isopeptide (Lys-Gly) (interchain with G-Cter in SUMO2) cross-link involves residue lysine 443.

It belongs to the krueppel C2H2-type zinc-finger protein family.

Its subcellular location is the nucleus. May be involved in transcriptional regulation. This is Zinc finger protein 394 (ZNF394) from Pan paniscus (Pygmy chimpanzee).